A 225-amino-acid polypeptide reads, in one-letter code: MSLQIPAQPQLLVRQLGRRPYQPVWDAMKAFTDNRTSDTPDEFWVVEHDPVYTQGQAGKAEHLLAPGDIPVVQSDRGGQVTYHGPGQLVLYVLVDVRRSKLSVRELVTCLETAIINTLAKSDIQAYAKADAPGVYVTNELGMEAKLASLGLRIRKGCSFHGLALNINMDMTPFLRINPCGYAGMAMTQTSALGGPQSVAEAQAILVAELASLIGYQTITNADDTP.

The BPL/LPL catalytic domain occupies 37 to 217; the sequence is SDTPDEFWVV…ELASLIGYQT (181 aa). Substrate is bound by residues 76–83, 148–150, and 161–163; these read RGGQVTYH, SLG, and GLA. Residue Cys179 is the Acyl-thioester intermediate of the active site.

Belongs to the LipB family.

The protein localises to the cytoplasm. It carries out the reaction octanoyl-[ACP] + L-lysyl-[protein] = N(6)-octanoyl-L-lysyl-[protein] + holo-[ACP] + H(+). Its pathway is protein modification; protein lipoylation via endogenous pathway; protein N(6)-(lipoyl)lysine from octanoyl-[acyl-carrier-protein]: step 1/2. Functionally, catalyzes the transfer of endogenously produced octanoic acid from octanoyl-acyl-carrier-protein onto the lipoyl domains of lipoate-dependent enzymes. Lipoyl-ACP can also act as a substrate although octanoyl-ACP is likely to be the physiological substrate. The chain is Octanoyltransferase from Aeromonas salmonicida (strain A449).